Here is a 333-residue protein sequence, read N- to C-terminus: Acetyltransferase Pat (333 aa).

3',5'-cyclic AMP-binding positions include 88–91 (GEIA), 98–99 (RS), and Arg138. One can recognise an N-acetyltransferase domain in the interval 156 to 318 (LMLRPVLPGD…GELSLGREMV (163 aa)). His173 contributes to the substrate binding site. Asp214 is a Mg(2+) binding site. Residues 238–240 (FTV), 246–251 (GRGIGS), Asn277, and Arg286 each bind substrate.

Homodimer. The cofactor is Mg(2+).

Its activity is regulated as follows. Autoinhibited and allosterically activated by 3,5-cyclic adenosine monophosphate (cAMP). An extensive conformational rearrangement relieves this autoinhibition by means of a substrate-mimicking lid that covers the protein-substrate binding surface. Its function is as follows. Catalyzes specifically the acetylation of the epsilon-amino group of a highly conserved lysine residue in acetyl-CoA synthetase (ACS). This acetylation results in the inactivation of ACS activity and could be important for mycobacteria to adjust to environmental changes. The protein is Acetyltransferase Pat of Mycobacterium tuberculosis (strain ATCC 25618 / H37Rv).